Consider the following 153-residue polypeptide: Transcriptional repressor NrdR (153 aa).

The segment at 3 to 34 (CPFCNNINTQVKDSRAIEDDILIRRRRICLVC) is a zinc-finger region. The ATP-cone domain occupies 49–139 (FMVIKKNGET…VYMNFKNIND (91 aa)).

This sequence belongs to the NrdR family. The cofactor is Zn(2+).

Negatively regulates transcription of bacterial ribonucleotide reductase nrd genes and operons by binding to NrdR-boxes. In Ehrlichia canis (strain Jake), this protein is Transcriptional repressor NrdR.